The sequence spans 491 residues: Ketol-acid reductoisomerase (NADP(+)) (491 aa).

Residues 15 to 208 (AQLGKCRFMG…GGHRAGVLES (194 aa)) enclose the KARI N-terminal Rossmann domain. NADP(+) is bound by residues 45–48 (CGAQ), Arg-68, Arg-76, Ser-78, and 108–110 (DKQ). Residue His-132 is part of the active site. Gly-158 provides a ligand contact to NADP(+). KARI C-terminal knotted domains follow at residues 209–344 (SFVA…TAPQ) and 345–484 (YEGK…MTDM). The Mg(2+) site is built by Asp-217, Glu-221, Glu-389, and Glu-393. Residue Ser-414 coordinates substrate.

It belongs to the ketol-acid reductoisomerase family. Mg(2+) serves as cofactor.

The enzyme catalyses (2R)-2,3-dihydroxy-3-methylbutanoate + NADP(+) = (2S)-2-acetolactate + NADPH + H(+). The catalysed reaction is (2R,3R)-2,3-dihydroxy-3-methylpentanoate + NADP(+) = (S)-2-ethyl-2-hydroxy-3-oxobutanoate + NADPH + H(+). Its pathway is amino-acid biosynthesis; L-isoleucine biosynthesis; L-isoleucine from 2-oxobutanoate: step 2/4. The protein operates within amino-acid biosynthesis; L-valine biosynthesis; L-valine from pyruvate: step 2/4. Its function is as follows. Involved in the biosynthesis of branched-chain amino acids (BCAA). Catalyzes an alkyl-migration followed by a ketol-acid reduction of (S)-2-acetolactate (S2AL) to yield (R)-2,3-dihydroxy-isovalerate. In the isomerase reaction, S2AL is rearranged via a Mg-dependent methyl migration to produce 3-hydroxy-3-methyl-2-ketobutyrate (HMKB). In the reductase reaction, this 2-ketoacid undergoes a metal-dependent reduction by NADPH to yield (R)-2,3-dihydroxy-isovalerate. The protein is Ketol-acid reductoisomerase (NADP(+)) of Escherichia fergusonii (strain ATCC 35469 / DSM 13698 / CCUG 18766 / IAM 14443 / JCM 21226 / LMG 7866 / NBRC 102419 / NCTC 12128 / CDC 0568-73).